The following is a 237-amino-acid chain: NAD-dependent protein deacetylase (237 aa).

In terms of domain architecture, Deacetylase sirtuin-type spans 1–237; it reads MLTTWLTEAK…LEETNRALQA (237 aa). NAD(+)-binding residues include Ala18, Thr22, Phe29, Arg30, Gln95, Asp98, and His113. Phe29 is a binding site for nicotinamide. Nicotinamide is bound at residue Asp98. Residue His113 is the Proton acceptor of the active site. Cys121, Cys124, Cys140, and Cys142 together coordinate Zn(2+). NAD(+) is bound by residues Ser180, Ser181, Asn205, and Ile224.

The protein belongs to the sirtuin family. Class U subfamily. The cofactor is Zn(2+).

The protein localises to the cytoplasm. The catalysed reaction is N(6)-acetyl-L-lysyl-[protein] + NAD(+) + H2O = 2''-O-acetyl-ADP-D-ribose + nicotinamide + L-lysyl-[protein]. Its function is as follows. NAD-dependent protein deacetylase which modulates the activities of several enzymes which are inactive in their acetylated form. This chain is NAD-dependent protein deacetylase, found in Halalkalibacterium halodurans (strain ATCC BAA-125 / DSM 18197 / FERM 7344 / JCM 9153 / C-125) (Bacillus halodurans).